Reading from the N-terminus, the 300-residue chain is D-alanine--D-alanine ligase (300 aa).

The 195-residue stretch at 99–293 (KKILKYANIN…FAELLNSIVK (195 aa)) folds into the ATP-grasp domain. 126–181 (IEKIGYPVFVKPNSGGSSVATNLVKDKEGIKEAVELALKYDKEVMIENYTKGEEIT) contributes to the ATP binding site. Residues Asp248, Glu260, and Asn262 each contribute to the Mg(2+) site.

The protein belongs to the D-alanine--D-alanine ligase family. It depends on Mg(2+) as a cofactor. Mn(2+) is required as a cofactor.

The protein resides in the cytoplasm. It catalyses the reaction 2 D-alanine + ATP = D-alanyl-D-alanine + ADP + phosphate + H(+). It participates in cell wall biogenesis; peptidoglycan biosynthesis. In terms of biological role, cell wall formation. The chain is D-alanine--D-alanine ligase from Clostridium botulinum (strain Okra / Type B1).